The following is a 443-amino-acid chain: Probable D-serine dehydratase (443 aa).

Position 116 is an N6-(pyridoxal phosphate)lysine (K116).

The protein belongs to the serine/threonine dehydratase family. DsdA subfamily. Pyridoxal 5'-phosphate serves as cofactor.

It catalyses the reaction D-serine = pyruvate + NH4(+). This Bacillus cereus (strain ATCC 14579 / DSM 31 / CCUG 7414 / JCM 2152 / NBRC 15305 / NCIMB 9373 / NCTC 2599 / NRRL B-3711) protein is Probable D-serine dehydratase.